Reading from the N-terminus, the 518-residue chain is Metal transporter Nramp1 (518 aa).

A run of 12 helical transmembrane segments spans residues 35–55, 68–88, 107–127, 131–151, 172–192, 218–238, 255–275, 315–337, 357–377, 382–402, 418–438, and 458–478; these read FLSH…PGNM, ELLW…SLSA, PVWV…ASDI, IGTG…GVLI, VVVA…MSIV, IALL…ALVL, FFLF…IAII, SATV…GTYA, LMTR…GGSS, LIVI…IPLL, IYIV…NIYF, and VLIG…VIYL.

It belongs to the NRAMP (TC 2.A.55) family.

The protein localises to the membrane. Probable metal transporter that may participate in the control of iron homeostasis. This is Metal transporter Nramp1 (NRAMP1) from Oryza sativa subsp. japonica (Rice).